The sequence spans 172 residues: Monopolar attachment protein 1 (172 aa).

Residues 15–30 show a composition bias toward basic residues; the sequence is KKNKNPKISNSKKKNS. Residues 15–43 are disordered; it reads KKNKNPKISNSKKKNSTRPALQDKTNQTL. A compositionally biased stretch (polar residues) spans 31 to 43; that stretch reads TRPALQDKTNQTL. The POLO box domain (PBD)-binding signature appears at 100 to 102; it reads STP.

Interacts with rec8, Interacts with plo1.

It localises to the nucleus. Its subcellular location is the chromosome. It is found in the centromere. The protein localises to the kinetochore. Its function is as follows. Plays an important role in chromosome segregation during meiosis I by allowing meiotic rec8 to establish cohesion at the centromeric central core and thereby promote the side-by-side structure of kinetochores at meiosis I. Enables monopolar attachment during meiosis I. Required to facilitate kinetochore mono-orientation during meiosis I, when kinetochores on sister chromosomes face the same direction and are thus captured and pulled by spindle fibers from the same pole. Acts in collaboration with plo1. The protein is Monopolar attachment protein 1 (moa1) of Schizosaccharomyces pombe (strain 972 / ATCC 24843) (Fission yeast).